The primary structure comprises 313 residues: Fe-S cluster assembly protein DRE2 (313 aa).

The N-terminal SAM-like domain stretch occupies residues 1-184; that stretch reads MTLRILLLLH…KKLLDRSNEV (184 aa). Low complexity predominate over residues 134–144; it reads NITSNSNNNDS. Disordered stretches follow at residues 134–155, 187–254, and 271–313; these read NITS…NNTG, NLAS…QEDN, and NLII…RQSG. The linker stretch occupies residues 185-270; it reads KGNLASGTVK…NDLISELKSD (86 aa). Positions 189-207 are enriched in polar residues; sequence ASGTVKSPSPGLTDTSAQN. Acidic residues predominate over residues 233 to 254; it reads SDSDNNEGRDLDDDDDDGQEDN.

It belongs to the anamorsin family. As to quaternary structure, monomer. Interacts with TAH18. Interacts with MIA40.

The protein localises to the cytoplasm. It is found in the mitochondrion intermembrane space. Its function is as follows. Component of the cytosolic iron-sulfur (Fe-S) protein assembly (CIA) machinery required for the maturation of extramitochondrial Fe-S proteins. Part of an electron transfer chain functioning in an early step of cytosolic Fe-S biogenesis, facilitating the de novo assembly of a [4Fe-4S] cluster on the scaffold complex CFD1-NBP35. Electrons are transferred to DRE2 from NADPH via the FAD- and FMN-containing protein TAH18. TAH18-DRE2 are also required for the assembly of the diferric tyrosyl radical cofactor of ribonucleotide reductase (RNR), probably by providing electrons for reduction during radical cofactor maturation in the catalytic small subunit RNR2. The protein is Fe-S cluster assembly protein DRE2 (DRE2) of Lodderomyces elongisporus (strain ATCC 11503 / CBS 2605 / JCM 1781 / NBRC 1676 / NRRL YB-4239) (Yeast).